The following is a 183-amino-acid chain: UPF0397 protein VSAL_I1988 (183 aa).

Transmembrane regions (helical) follow at residues 8–28 (VVVI…MFGI), 41–61 (AVLA…VGFI), 74–94 (VWLT…LFPI), 110–130 (FFIF…TSAF), and 147–167 (LCII…FILT).

It belongs to the UPF0397 family.

The protein localises to the cell membrane. This is UPF0397 protein VSAL_I1988 from Aliivibrio salmonicida (strain LFI1238) (Vibrio salmonicida (strain LFI1238)).